Consider the following 470-residue polypeptide: Asparagine--tRNA ligase (470 aa).

It belongs to the class-II aminoacyl-tRNA synthetase family. As to quaternary structure, homodimer.

The protein resides in the cytoplasm. The enzyme catalyses tRNA(Asn) + L-asparagine + ATP = L-asparaginyl-tRNA(Asn) + AMP + diphosphate + H(+). This chain is Asparagine--tRNA ligase, found in Blochmanniella pennsylvanica (strain BPEN).